The chain runs to 332 residues: Biotin synthase (332 aa).

Positions 53–282 (HFGKKVKLNM…TKEIRISGGR (230 aa)) constitute a Radical SAM core domain. The [4Fe-4S] cluster site is built by Cys-71, Cys-75, and Cys-78. 4 residues coordinate [2Fe-2S] cluster: Cys-115, Cys-147, Cys-207, and Arg-277.

This sequence belongs to the radical SAM superfamily. Biotin synthase family. Homodimer. [4Fe-4S] cluster is required as a cofactor. Requires [2Fe-2S] cluster as cofactor.

It carries out the reaction (4R,5S)-dethiobiotin + (sulfur carrier)-SH + 2 reduced [2Fe-2S]-[ferredoxin] + 2 S-adenosyl-L-methionine = (sulfur carrier)-H + biotin + 2 5'-deoxyadenosine + 2 L-methionine + 2 oxidized [2Fe-2S]-[ferredoxin]. It participates in cofactor biosynthesis; biotin biosynthesis; biotin from 7,8-diaminononanoate: step 2/2. In terms of biological role, catalyzes the conversion of dethiobiotin (DTB) to biotin by the insertion of a sulfur atom into dethiobiotin via a radical-based mechanism. The polypeptide is Biotin synthase (Bacillus cereus (strain ATCC 10987 / NRS 248)).